A 460-amino-acid chain; its full sequence is GTPase Der (460 aa).

2 consecutive EngA-type G domains span residues 9 to 171 (KTIA…SLNQ) and 199 to 370 (IQVG…ECFS). GTP-binding positions include 15 to 22 (GQPNVGKS), 62 to 66 (DTGGM), 123 to 126 (NKID), 205 to 212 (GRVNVGKS), 252 to 256 (DTAGI), and 316 to 319 (NKWD). The 85-residue stretch at 371 to 455 (RRIPTSLLNS…PLILNAKDKK (85 aa)) folds into the KH-like domain.

It belongs to the TRAFAC class TrmE-Era-EngA-EngB-Septin-like GTPase superfamily. EngA (Der) GTPase family. Associates with the 50S ribosomal subunit.

Its function is as follows. GTPase that plays an essential role in the late steps of ribosome biogenesis. The protein is GTPase Der of Helicobacter pylori (strain G27).